Consider the following 362-residue polypeptide: MAQVFKVAVLPGDGIGPEVMAEALRVLDAVEAKYDVKFERTHANVGGAGIDIEGKALPETTVNICKAADAILFGSVGGPKWESLPPDEQPERGALLPLRKIFGLYANLRPAIIFPSLTGASSLKEEVIAGGFNVLVIRELTGGIYFAQPKGIEGEGRDRVGFDTMRYSVPEIERITHVAFQAARKRGKKVCSIDKANVLSSSVLWREVVTGIAKEYPDVELSHMYVDNAAMQLVRWPKQFDVILCENMFGDILSDEAAMLTGSLGMLPSASLAEGTFGMYEPSGGSAPDIAGQGIANPIAQILSMGMMLKFSFGMVDAADAIDNAVATVLDQGFRTRDIYQQKDGEKLVNTKEMGDAIIAAL.

Glycine 78–glutamate 91 is an NAD(+) binding site. Substrate contacts are provided by arginine 99, arginine 109, arginine 138, and aspartate 227. 3 residues coordinate Mg(2+): aspartate 227, aspartate 251, and aspartate 255. Glycine 285–asparagine 297 serves as a coordination point for NAD(+).

This sequence belongs to the isocitrate and isopropylmalate dehydrogenases family. LeuB type 1 subfamily. As to quaternary structure, homodimer. It depends on Mg(2+) as a cofactor. Mn(2+) is required as a cofactor.

The protein localises to the cytoplasm. It catalyses the reaction (2R,3S)-3-isopropylmalate + NAD(+) = 4-methyl-2-oxopentanoate + CO2 + NADH. It functions in the pathway amino-acid biosynthesis; L-leucine biosynthesis; L-leucine from 3-methyl-2-oxobutanoate: step 3/4. Functionally, catalyzes the oxidation of 3-carboxy-2-hydroxy-4-methylpentanoate (3-isopropylmalate) to 3-carboxy-4-methyl-2-oxopentanoate. The product decarboxylates to 4-methyl-2 oxopentanoate. The sequence is that of 3-isopropylmalate dehydrogenase from Geobacter sulfurreducens (strain ATCC 51573 / DSM 12127 / PCA).